Consider the following 1107-residue polypeptide: Membrane-associated guanylate kinase, WW and PDZ domain-containing protein 3 (1107 aa).

A PDZ 1 domain is found at 17–102; sequence ECGLSGVGGD…PIRLKTVKPG (86 aa). In terms of domain architecture, Guanylate kinase-like spans 110-284; sequence RHYLSLQFQK…SMDFRNYLTR (175 aa). 117 to 124 contacts ATP; the sequence is FQKGSIDH. The tract at residues 210 to 277 is disordered; sequence FDTETQRKRT…SYNQTNSSMD (68 aa). The segment covering 220–231 has biased composition (polar residues); sequence TSVSKMQRTDSS. The span at 232 to 241 shows a compositional bias: acidic residues; sequence LPEEEDEEER. Residues 251-261 are compositionally biased toward basic and acidic residues; it reads TDHRDRQEPSE. Positions 267-277 are enriched in polar residues; that stretch reads PSYNQTNSSMD. WW domains lie at 289 to 322 and 335 to 368; these read EPLP…DPRL and GELP…NPVL. Positions 374–398 are disordered; the sequence is KQLNPAPSEGTVHQEPENSQFTRDP. 4 consecutive PDZ domains span residues 407 to 489, 577 to 653, 727 to 809, and 853 to 940; these read HTSL…TLCR, TIPL…LILR, DVFL…TVRR, and DVIL…IAEE. The tract at residues 941 to 975 is disordered; that stretch reads EHRGPPSGSNSARQSPAPQHRPMGQTQPTYGTLDR. Positions 947-957 are enriched in polar residues; that stretch reads SGSNSARQSPA. A PDZ 6 domain is found at 1003–1085; it reads PVELERGPRG…KVLLLLRPGT (83 aa).

The protein belongs to the MAGUK family.

Its subcellular location is the cell membrane. The protein resides in the cell junction. It localises to the tight junction. Functionally, acts as a scaffolding protein at cell-cell junctions, thereby regulating various cellular and signaling processes. The chain is Membrane-associated guanylate kinase, WW and PDZ domain-containing protein 3 (magi3) from Xenopus tropicalis (Western clawed frog).